The following is a 335-amino-acid chain: UPF0324 membrane protein gbs1193 (335 aa).

9 helical membrane passes run 20 to 42, 57 to 79, 84 to 106, 116 to 138, 151 to 173, 210 to 232, 253 to 275, 285 to 304, and 311 to 333; these read SWLLGLYLPLIGAPVFAILIGII, IAFTSKYILQTAVVLLGFGLNLM, VGISSLPIIIMTISISLIIAYVL, IATLIGVGSSICGGSAIAATAPV, SVIFLFNILAALIFPTLGNFIGL, GATIVKLTRTLAIIPITIVLSIY, VLYFILASLLTTIVASLGFSLRI, FFIVMAMGAIGINTNVSKLI, and ILLGAACWLGIIIVSLTMQAILG.

Belongs to the UPF0324 family.

Its subcellular location is the cell membrane. The chain is UPF0324 membrane protein gbs1193 from Streptococcus agalactiae serotype III (strain NEM316).